Here is a 607-residue protein sequence, read N- to C-terminus: Guanine nucleotide-binding protein-like 1 (607 aa).

Basic residues predominate over residues 1-14 (MPRKKPFSVKQKKK). A disordered region spans residues 1–81 (MPRKKPFSVK…GPRGYDPNRY (81 aa)). The segment covering 15 to 26 (QLQDKRERKRGL) has biased composition (basic and acidic residues). Phosphoserine is present on residues Ser-32, Ser-33, and Ser-34. Residues Thr-48 and Thr-50 each carry the phosphothreonine modification. A phosphoserine mark is found at Ser-51 and Ser-68. In terms of domain architecture, CP-type G spans 178–418 (WRQLWRVLEM…LCDCPGLIFP (241 aa)). 225–228 (NKVD) lines the GTP pocket. Phosphoserine is present on Ser-324. Residues 367–374 (GFPNVGKS) and 411–415 (DCPGL) contribute to the GTP site. Residues 547-607 (GPAGDEEEEE…PYALLGEDEC (61 aa)) form a disordered region. Over residues 550 to 584 (GDEEEEEEEELSSSCEEEGEEDRDADEEGEGDEET) the composition is skewed to acidic residues. Ser-561, Ser-562, and Ser-563 each carry phosphoserine.

The protein belongs to the TRAFAC class YlqF/YawG GTPase family.

Possible regulatory or functional link with the histocompatibility cluster. The protein is Guanine nucleotide-binding protein-like 1 (GNL1) of Homo sapiens (Human).